A 229-amino-acid chain; its full sequence is C-&gt;U-editing enzyme APOBEC-1 (229 aa).

One can recognise a CMP/dCMP-type deaminase domain in the interval 10–134; it reads VDPTLRRRIE…QRNRQGLRDL (125 aa). Residue His-61 participates in Zn(2+) binding. The active-site Proton donor is Glu-63. Zn(2+) contacts are provided by Cys-93 and Cys-96.

It belongs to the cytidine and deoxycytidylate deaminase family. As to quaternary structure, homodimer. Interacts with A1CF; form an mRNA editing complex. Interacts with RBM47; form an mRNA editing complex. Found in a complex with CELF2/CUGBP2 and A1CF. Interacts with HNRPAB. Interacts with SYNCRIP. Zn(2+) is required as a cofactor. In terms of tissue distribution, expressed in the spleen. Expressed at lower level in the kidney, testis, lung, brain and liver.

Its subcellular location is the cytoplasm. It localises to the nucleus. The enzyme catalyses a cytidine in mRNA + H2O + H(+) = a uridine in mRNA + NH4(+). It carries out the reaction cytidine(6666) in apoB mRNA + H2O + H(+) = uridine(6666) in apoB mRNA + NH4(+). Functionally, cytidine deaminase catalyzing the cytidine to uridine postranscriptional editing of a variety of mRNAs. Form complexes with cofactors that confer differential editing activity and selectivity. Responsible for the postranscriptional editing of a CAA codon for Gln to a UAA codon for stop in the apolipoprotein B mRNA. Also involved in CGA (Arg) to UGA (Stop) editing in the NF1 mRNA. May also play a role in the epigenetic regulation of gene expression by participating in DNA demethylation. This chain is C-&gt;U-editing enzyme APOBEC-1, found in Mus musculus (Mouse).